Consider the following 354-residue polypeptide: Serum paraoxonase/arylesterase 2 (354 aa).

Asparagine 29 is a glycosylation site (N-linked (GlcNAc...) asparagine). A disulfide bridge connects residues cysteine 42 and cysteine 352. The Ca(2+) site is built by glutamate 53 and aspartate 54. Residue histidine 114 is the Proton acceptor of the active site. Ca(2+)-binding residues include isoleucine 116, asparagine 167, aspartate 168, and asparagine 223. Asparagine 254 carries an N-linked (GlcNAc...) asparagine glycan. Residues aspartate 268 and asparagine 269 each coordinate Ca(2+). Residues asparagine 269 and asparagine 323 are each glycosylated (N-linked (GlcNAc...) asparagine).

This sequence belongs to the paraoxonase family. The cofactor is Ca(2+). In terms of processing, glycosylated. The signal sequence is not cleaved.

It localises to the membrane. The catalysed reaction is a phenyl acetate + H2O = a phenol + acetate + H(+). It catalyses the reaction An aryl dialkyl phosphate + H2O = dialkyl phosphate + an aryl alcohol.. The absence of paraoxonase activity in turkey and chicken blood and in turkey liver indicates that PON2, if expressed, does not hydrolyze paraoxon. This Gallus gallus (Chicken) protein is Serum paraoxonase/arylesterase 2 (PON2).